We begin with the raw amino-acid sequence, 362 residues long: 3-dehydroquinate synthase (362 aa).

NAD(+) is bound by residues 71-76 (DGEQYK), 105-109 (GVIGD), 129-130 (TT), Lys-142, Lys-151, and 169-172 (CLST). Zn(2+)-binding residues include Glu-184, His-247, and His-264.

The protein belongs to the sugar phosphate cyclases superfamily. Dehydroquinate synthase family. Co(2+) is required as a cofactor. It depends on Zn(2+) as a cofactor. The cofactor is NAD(+).

Its subcellular location is the cytoplasm. It carries out the reaction 7-phospho-2-dehydro-3-deoxy-D-arabino-heptonate = 3-dehydroquinate + phosphate. Its pathway is metabolic intermediate biosynthesis; chorismate biosynthesis; chorismate from D-erythrose 4-phosphate and phosphoenolpyruvate: step 2/7. Its function is as follows. Catalyzes the conversion of 3-deoxy-D-arabino-heptulosonate 7-phosphate (DAHP) to dehydroquinate (DHQ). This chain is 3-dehydroquinate synthase, found in Vibrio atlanticus (strain LGP32) (Vibrio splendidus (strain Mel32)).